The following is a 216-amino-acid chain: MSFLNRNLSRTIKAAVRGKHTLPKLPYDYGALAPIISKDILEVHHGKHHQTYVNNLNAVEEQMTEAHSKKDVNKVVELSKNYAFNWGGHLNHSIYWQNLSPTKSEPSADLKKAIEEQFSSFEQFKKDLSALSIGVQGSGWGWLGYNKKXKKLQILAVSNQEPLQAVTGLVPLFAIDVWEHAYYLQXKNXXAKYVEAXWDIANWKBISDRYAEATCN.

A mitochondrion-targeting transit peptide spans 1–18 (MSFLNRNLSRTIKAAVRG). Histidine 44, histidine 92, aspartate 176, and histidine 180 together coordinate Mn(2+).

The protein belongs to the iron/manganese superoxide dismutase family. It depends on Mn(2+) as a cofactor.

It is found in the mitochondrion matrix. The enzyme catalyses 2 superoxide + 2 H(+) = H2O2 + O2. In terms of biological role, destroys superoxide anion radicals which are normally produced within the cells and which are toxic to biological systems. The chain is Superoxide dismutase [Mn], mitochondrial (Sod2) from Glossina morsitans morsitans (Savannah tsetse fly).